A 100-amino-acid polypeptide reads, in one-letter code: Urease subunit gamma (100 aa).

It belongs to the urease gamma subunit family. Heterotrimer of UreA (gamma), UreB (beta) and UreC (alpha) subunits. Three heterotrimers associate to form the active enzyme.

The protein localises to the cytoplasm. It carries out the reaction urea + 2 H2O + H(+) = hydrogencarbonate + 2 NH4(+). Its pathway is nitrogen metabolism; urea degradation; CO(2) and NH(3) from urea (urease route): step 1/1. In Yersinia aldovae, this protein is Urease subunit gamma.